A 730-amino-acid chain; its full sequence is Protein folded gastrulation (730 aa).

The N-terminal stretch at 1–21 (MSPPNCLLAVLALTVFIGANN) is a signal peptide. Residues asparagine 51 and asparagine 193 are each glycosylated (N-linked (GlcNAc...) asparagine). Residues 197–211 (TPETSTSITPTSTTT) are compositionally biased toward low complexity. The segment at 197-222 (TPETSTSITPTSTTTFAVPSVPSGEA) is disordered. Residues asparagine 252 and asparagine 289 are each glycosylated (N-linked (GlcNAc...) asparagine). Residues 361 to 385 (ELEEEVGEEEVTATDILPSEEDEYT) show a composition bias toward acidic residues. Positions 361 to 424 (ELEEEVGEEE…SPHPPEEPEI (64 aa)) are disordered. Over residues 386–415 (TETATTTGDTTVAEASMDTSTATSTSGQSS) the composition is skewed to low complexity. Asparagine 459 is a glycosylation site (N-linked (GlcNAc...) asparagine). Disordered regions lie at residues 474–526 (EDES…GGHK) and 545–583 (KGKQ…TTTT). Low complexity predominate over residues 478–491 (STTTATPEPSSSTP). Over residues 504–513 (DNDNLMTNTI) the composition is skewed to polar residues. Over residues 567–583 (TSALTSTSTEDATTTTT) the composition is skewed to low complexity. N-linked (GlcNAc...) asparagine glycans are attached at residues asparagine 590 and asparagine 639. Residues 663 to 676 (SAASTESAGTAATT) are compositionally biased toward low complexity. Residues 663–683 (SAASTESAGTAATTPNSSSNP) form a disordered region. The N-linked (GlcNAc...) asparagine glycan is linked to asparagine 678.

In terms of processing, may be highly O-glycosylated in its Ser/Thr-rich C-terminal part. Expressed in the invagination primordia in a pattern that precisely precedes the pattern of constrictions.

It localises to the secreted. The protein resides in the extracellular space. It is found in the extracellular matrix. Coordinates cell shape changes during formation of the ventral furrow and invagination of the posterior midgut primordium, by inducing apical constriction of cells in spatially and temporally defined manners. Could function as a secreted signal to initiate apical constriction by acting as a ligand for an unidentified G protein-coupled receptor, which in turn activates the G protein alpha subunit encoded by concertina, in neighboring cells. Such an intracellular pathway would ultimately induce contraction of the apical actin-myosin network. In the ventral furrow, fog appears to ensure that all the cells initiate constriction within several minutes of each other. In the posterior midgut invagination, fog appears to direct the ordered progression of constriction initiations out from a central region and also to delimit the peripheral extent of this spreading. This chain is Protein folded gastrulation (fog), found in Drosophila melanogaster (Fruit fly).